The following is a 239-amino-acid chain: Lactate utilization protein A (239 aa).

This sequence belongs to the LutA/YkgE family.

In terms of biological role, is involved in L-lactate degradation and allows cells to grow with lactate as the sole carbon source. The sequence is that of Lactate utilization protein A from Bacillus cytotoxicus (strain DSM 22905 / CIP 110041 / 391-98 / NVH 391-98).